Here is a 508-residue protein sequence, read N- to C-terminus: Non-structural protein 1 (508 aa).

Polar residues predominate over residues 424–453; the sequence is NTESTTTNNAQSPVSDPVNASANVKTSPAG. The segment at 424 to 464 is disordered; it reads NTESTTTNNAQSPVSDPVNASANVKTSPAGTHTDESVMKKE. Positions 455–464 are enriched in basic and acidic residues; sequence HTDESVMKKE.

In Banna virus (BAV), this protein is Non-structural protein 1 (Segment-5).